The primary structure comprises 990 residues: Chondroitin sulfate ABC exolyase (990 aa).

Residue His453 is the Proton acceptor of the active site. Tyr460 (proton donor) is an active-site residue.

This sequence belongs to the polysaccharide lyase 8 family.

The enzyme catalyses Exolytic removal of Delta(4)-unsaturated disaccharide residues from the non-reducing ends of both polymeric chondroitin/dermatan sulfates and their oligosaccharide fragments.. With respect to regulation, inhibited by Zn(2+), whereas Ni(2+), Fe(2+), and Cu(2+) have little or no effect on activity. In terms of biological role, broad-specificity glycosaminoglycan lyase, which acts in an exolytic fashion, and preferentially degrades the tetra- and hexasaccharide derivatives of chondroitin sulfate and dermatan sulfate produced by the chondroitin sulfate ABC endolyase, to yield the respective disaccharides. To a lesser extent, is also able to split off disaccharide residues directly from polymeric chondroitin 4- and 6-sulfate, dermatan sulfate, chondroitin, and hyaluronan. Is not active against keratan sulfate, heparan sulfate, and heparin. The chain is Chondroitin sulfate ABC exolyase (ChABCII) from Proteus vulgaris.